Here is a 295-residue protein sequence, read N- to C-terminus: Acetaldehyde dehydrogenase 2 (295 aa).

17-20 (TGNI) lines the NAD(+) pocket. Cys-132 functions as the Acyl-thioester intermediate in the catalytic mechanism. NAD(+) is bound by residues 164-172 (SVGPASRAN) and Asn-275.

This sequence belongs to the acetaldehyde dehydrogenase family.

It carries out the reaction acetaldehyde + NAD(+) + CoA = acetyl-CoA + NADH + H(+). The polypeptide is Acetaldehyde dehydrogenase 2 (Salinispora arenicola (strain CNS-205)).